A 194-amino-acid polypeptide reads, in one-letter code: Leucyl/phenylalanyl-tRNA--protein transferase (194 aa).

Belongs to the L/F-transferase family.

It localises to the cytoplasm. The enzyme catalyses N-terminal L-lysyl-[protein] + L-leucyl-tRNA(Leu) = N-terminal L-leucyl-L-lysyl-[protein] + tRNA(Leu) + H(+). It carries out the reaction N-terminal L-arginyl-[protein] + L-leucyl-tRNA(Leu) = N-terminal L-leucyl-L-arginyl-[protein] + tRNA(Leu) + H(+). The catalysed reaction is L-phenylalanyl-tRNA(Phe) + an N-terminal L-alpha-aminoacyl-[protein] = an N-terminal L-phenylalanyl-L-alpha-aminoacyl-[protein] + tRNA(Phe). In terms of biological role, functions in the N-end rule pathway of protein degradation where it conjugates Leu, Phe and, less efficiently, Met from aminoacyl-tRNAs to the N-termini of proteins containing an N-terminal arginine or lysine. This chain is Leucyl/phenylalanyl-tRNA--protein transferase, found in Chlorobium phaeobacteroides (strain DSM 266 / SMG 266 / 2430).